The primary structure comprises 413 residues: uncharacterized protein (413 aa).

The Response regulatory domain occupies 2–129; it reads RILIVDDENT…KTTWKLRLME (128 aa). Position 54 is a 4-aspartylphosphate (Asp54).

This is an uncharacterized protein from Sinorhizobium fredii (strain NBRC 101917 / NGR234).